Consider the following 110-residue polypeptide: Putative UPF0377 protein YKL223W (110 aa).

Belongs to the UPF0377 family.

This chain is Putative UPF0377 protein YKL223W, found in Saccharomyces cerevisiae (strain ATCC 204508 / S288c) (Baker's yeast).